We begin with the raw amino-acid sequence, 303 residues long: DCN1-like protein 3 (303 aa).

2 disordered regions span residues 1–41 (MGQC…HLSI) and 62–83 (EASQ…TGAE). Gly2 carries the N-myristoyl glycine lipid modification. Residues 85-277 (SSVQRIEELF…LFDTFVEWEM (193 aa)) form the DCUN1 domain. The tract at residues 284–303 (EETKCIPCSGTDDQSTEGQT) is disordered. A compositionally biased stretch (polar residues) spans 294–303 (TDDQSTEGQT).

In terms of assembly, may interact (via the DCUN1 domain) with unneddylated cullins.

It is found in the cell membrane. The protein localises to the cytoplasm. The protein resides in the nucleus. Its subcellular location is the perinuclear region. Functionally, contributes to the neddylation of all cullins by transferring NEDD8 from N-terminally acetylated NEDD8-conjugating E2s enzyme to different cullin C-terminal domain-RBX complexes. At the cell membrane, can promote and as well inhibit cullins neddylation. In Xenopus tropicalis (Western clawed frog), this protein is DCN1-like protein 3.